A 548-amino-acid polypeptide reads, in one-letter code: MDSQRNLLVIALLFVSFMIWQAWEQDKNPQPQTQQTTQTTTTAAGSAADQGVPASGQGKMITVKTDVLDLTINTHGGDVEQALLPAYPKELGSNEPFQLLETTPQFIYQAQSGLTGRDGPDNPANGPRPLYNVEKDAFVLADGQNELQVPMTYTDAAGNTFTQTFVFKRGDYAVNVNYSVQNTGEKPLEVSTFGQLKQSVNLPPHRDTGSSNFALHTFRGAAYSTPDEKYEKYKFDTIADNENLNVSSKGGWVAMLQQYFATAWIPRNDGTNNFYTANLGNGIVAIGYKAQPVLVQPGQTSAMTSTLWVGPEIQDKMAAVAPHLDLTVDYGWLWFISQPLFKLLKWIHSFVGNWGFSIIIITFIVRGIMYPLTKAQYTSMAKMRMLQPKIQAMRERLGDDKQRQSQEMMALYKAEKVNPLGGCFPLIIQMPIFLALYYMLMGSIELRHAPFALWIHDLSAQDPYYILPILMGVTMFFIQKMSPTTVTDPMQQKIMTFMPVIFTVFFLWFPSGLVLYYIVSNLVTIIQQQLIYRGLEKRGLHSREKKKS.

The helical transmembrane segment at N6–D26 threads the bilayer. The segment at N28–G56 is disordered. The span at P29–T42 shows a compositional bias: low complexity. The next 4 helical transmembrane spans lie at F350–Y370, F424–I444, L458–I478, and P499–V519.

The protein belongs to the OXA1/ALB3/YidC family. Type 1 subfamily. In terms of assembly, interacts with the Sec translocase complex via SecD. Specifically interacts with transmembrane segments of nascent integral membrane proteins during membrane integration.

It localises to the cell inner membrane. Its function is as follows. Required for the insertion and/or proper folding and/or complex formation of integral membrane proteins into the membrane. Involved in integration of membrane proteins that insert both dependently and independently of the Sec translocase complex, as well as at least some lipoproteins. Aids folding of multispanning membrane proteins. This chain is Membrane protein insertase YidC, found in Salmonella choleraesuis (strain SC-B67).